Here is a 438-residue protein sequence, read N- to C-terminus: MQVTVEDLSSVKKVLHIEAPAEDVKKALDSAYAELKKQAKVKGFRPGKAPRSVLERLYKSDVESDVAGEIISDAFRDAIMETKLKIVGPPEIEPPAIVSDEPYKFDATVEIFPELSDLNLKEIELSKNMYKATEQEIENQIAMIRKNMSSLETEEEDRPAKEEDFVLIDYEGVCPDGQPDELRFTENFTMELGTGRILKDFDAQIVGMKRDEEKDFEISFPEDYFNKELASKQVKFHVKLKEIRKQILPELDDEFAKDLGEYETLDQLKDSIRDHLQQGYDRRSEQELDEQVFQALLNRVEFEVPETLIKHETASMVSEAERALSYRDMTFEDTGATKEDMEERYREPAEQQVRRYLLLDKIVEQENVELPEEELENAFKGMAESLRQPLEIVKKYYASDAEQMNMLRQTLLQKEALKYVKNLNEIKEVELELQETEE.

Residues glutamate 163–proline 249 enclose the PPIase FKBP-type domain.

It belongs to the FKBP-type PPIase family. Tig subfamily.

It is found in the cytoplasm. It carries out the reaction [protein]-peptidylproline (omega=180) = [protein]-peptidylproline (omega=0). In terms of biological role, involved in protein export. Acts as a chaperone by maintaining the newly synthesized protein in an open conformation. Functions as a peptidyl-prolyl cis-trans isomerase. The polypeptide is Trigger factor (Desulfatibacillum aliphaticivorans).